Reading from the N-terminus, the 394-residue chain is Small RNA 2'-O-methyltransferase (394 aa).

Asp-78 and Ser-114 together coordinate S-adenosyl-L-methionine. The Mg(2+) site is built by Glu-132, Glu-135, His-136, and His-181.

The protein belongs to the methyltransferase superfamily. HEN1 family. Requires Mg(2+) as cofactor.

It localises to the cytoplasm. It carries out the reaction small RNA 3'-end nucleotide + S-adenosyl-L-methionine = small RNA 3'-end 2'-O-methylnucleotide + S-adenosyl-L-homocysteine + H(+). In terms of biological role, methyltransferase that adds a 2'-O-methyl group at the 3'-end of piRNAs, a class of 24 to 30 nucleotide RNAs that are generated by a Dicer-independent mechanism and are primarily derived from transposons and other repeated sequence elements. This probably protects the 3'-end of piRNAs from uridylation activity and subsequent degradation. Stabilization of piRNAs is essential for gametogenesis. The protein is Small RNA 2'-O-methyltransferase (Henmt1) of Rattus norvegicus (Rat).